Reading from the N-terminus, the 290-residue chain is Ribosomal RNA small subunit methyltransferase A (290 aa).

S-adenosyl-L-methionine contacts are provided by Asn27, Leu29, Gly54, Glu75, Asp100, and Asn125.

The protein belongs to the class I-like SAM-binding methyltransferase superfamily. rRNA adenine N(6)-methyltransferase family. RsmA subfamily.

It localises to the cytoplasm. It catalyses the reaction adenosine(1518)/adenosine(1519) in 16S rRNA + 4 S-adenosyl-L-methionine = N(6)-dimethyladenosine(1518)/N(6)-dimethyladenosine(1519) in 16S rRNA + 4 S-adenosyl-L-homocysteine + 4 H(+). Specifically dimethylates two adjacent adenosines (A1518 and A1519) in the loop of a conserved hairpin near the 3'-end of 16S rRNA in the 30S particle. May play a critical role in biogenesis of 30S subunits. This Streptococcus pneumoniae (strain 70585) protein is Ribosomal RNA small subunit methyltransferase A.